Consider the following 323-residue polypeptide: Fatty acid desaturase 4, chloroplastic (323 aa).

The N-terminal 77 residues, 1–77, are a transit peptide targeting the chloroplast; it reads MAVSLPTKYP…PRPNREKLVV (77 aa). 2 helical membrane passes run 101–121 and 131–151; these read WVAA…IGGF and LAGY…HWAI. The Histidine box-1 motif lies at 170–173; the sequence is QGHH. Residues 204–224 traverse the membrane as a helical segment; sequence LAFNDPVFHGFVCTFAFCILF. Positions 229–233 match the Histidine box-2 motif; that stretch reads HAWAH. The Histidine box-3 signature appears at 258–262; the sequence is HAEHH.

Belongs to the fatty acid desaturase CarF family. Fe(2+) serves as cofactor.

It is found in the plastid. Its subcellular location is the chloroplast membrane. It carries out the reaction a 1-acyl-2-hexadecanoyl-glycerolipid + 2 reduced [2Fe-2S]-[ferredoxin] + O2 + 2 H(+) = a 1-acyl-2-[(3E)-hexadec-3-enoyl]-glycerolipid + 2 oxidized [2Fe-2S]-[ferredoxin] + 2 H2O. It functions in the pathway lipid metabolism; fatty acid metabolism. Its function is as follows. Fatty acid desaturase involved in the production of chloroplast-specific phosphatidylglycerol molecular species containing 16:1(3E). Catalyzes the formation of a trans double bond introduced close to the carboxyl group of palmitic acid, which is specifically esterified to the sn-2 glyceryl carbon of phosphatidylglycerol. The protein is Fatty acid desaturase 4, chloroplastic of Arabidopsis thaliana (Mouse-ear cress).